A 156-amino-acid chain; its full sequence is Ribonuclease pancreatic (156 aa).

The N-terminal stretch at methionine 1–glycine 28 is a signal peptide. Residues lysine 35 and arginine 38 each contribute to the substrate site. The active-site Proton acceptor is histidine 40. 4 cysteine pairs are disulfide-bonded: cysteine 54–cysteine 112, cysteine 68–cysteine 123, cysteine 86–cysteine 138, and cysteine 93–cysteine 100. Residue asparagine 62 is glycosylated (N-linked (GlcNAc...) asparagine). Lysine 69 to threonine 73 contacts substrate. A glycan (N-linked (GlcNAc...) asparagine) is linked at asparagine 90. Residues lysine 94 and arginine 113 each contribute to the substrate site. The Proton donor role is filled by histidine 147.

This sequence belongs to the pancreatic ribonuclease family. As to quaternary structure, monomer. Interacts with and forms tight 1:1 complexes with RNH1. Dimerization of two such complexes may occur. Interaction with RNH1 inhibits this protein.

The protein localises to the secreted. It catalyses the reaction an [RNA] containing cytidine + H2O = an [RNA]-3'-cytidine-3'-phosphate + a 5'-hydroxy-ribonucleotide-3'-[RNA].. The enzyme catalyses an [RNA] containing uridine + H2O = an [RNA]-3'-uridine-3'-phosphate + a 5'-hydroxy-ribonucleotide-3'-[RNA].. Its function is as follows. Endonuclease that catalyzes the cleavage of RNA on the 3' side of pyrimidine nucleotides. Acts on single-stranded and double-stranded RNA. This is Ribonuclease pancreatic (RNASE1) from Lagothrix lagotricha (Brown woolly monkey).